A 308-amino-acid chain; its full sequence is 1-acyl-sn-glycerol-3-phosphate acyltransferase (308 aa).

3 helical membrane passes run 65–85, 124–144, and 148–168; these read FLSM…LLPW, AIYI…WLIP, and VTIA…YVLA. Positions 130–135 match the HXXXXD motif motif; that stretch reads HASLVD.

The protein belongs to the 1-acyl-sn-glycerol-3-phosphate acyltransferase family.

The protein resides in the membrane. It catalyses the reaction a 1-acyl-sn-glycero-3-phosphate + an acyl-CoA = a 1,2-diacyl-sn-glycero-3-phosphate + CoA. Functionally, converts lysophosphatidic acid (LPA) into phosphatidic acid by incorporating acyl moiety at the 2 position. This enzyme shows a preference for medium-chain-length fatty acyl-coenzyme a substrates. This chain is 1-acyl-sn-glycerol-3-phosphate acyltransferase, found in Cocos nucifera (Coconut palm).